A 513-amino-acid chain; its full sequence is ATP synthase subunit alpha (513 aa).

169–176 (GDRQTGKT) lines the ATP pocket.

It belongs to the ATPase alpha/beta chains family. In terms of assembly, F-type ATPases have 2 components, CF(1) - the catalytic core - and CF(0) - the membrane proton channel. CF(1) has five subunits: alpha(3), beta(3), gamma(1), delta(1), epsilon(1). CF(0) has three main subunits: a(1), b(2) and c(9-12). The alpha and beta chains form an alternating ring which encloses part of the gamma chain. CF(1) is attached to CF(0) by a central stalk formed by the gamma and epsilon chains, while a peripheral stalk is formed by the delta and b chains.

The protein localises to the cell inner membrane. It catalyses the reaction ATP + H2O + 4 H(+)(in) = ADP + phosphate + 5 H(+)(out). Produces ATP from ADP in the presence of a proton gradient across the membrane. The alpha chain is a regulatory subunit. In Cupriavidus necator (strain ATCC 17699 / DSM 428 / KCTC 22496 / NCIMB 10442 / H16 / Stanier 337) (Ralstonia eutropha), this protein is ATP synthase subunit alpha.